We begin with the raw amino-acid sequence, 396 residues long: S-adenosylmethionine synthase (396 aa).

Position 16 (H16) interacts with ATP. Position 18 (D18) interacts with Mg(2+). E44 is a binding site for K(+). E57 and Q100 together coordinate L-methionine. A flexible loop region spans residues 100 to 110 (QSPDINQGVDR). ATP is bound by residues 165–167 (DAK), D240, 246–247 (RK), A263, and K267. Residue D240 participates in L-methionine binding. K271 lines the L-methionine pocket.

This sequence belongs to the AdoMet synthase family. In terms of assembly, homotetramer; dimer of dimers. It depends on Mg(2+) as a cofactor. K(+) is required as a cofactor.

The protein localises to the cytoplasm. It carries out the reaction L-methionine + ATP + H2O = S-adenosyl-L-methionine + phosphate + diphosphate. It functions in the pathway amino-acid biosynthesis; S-adenosyl-L-methionine biosynthesis; S-adenosyl-L-methionine from L-methionine: step 1/1. In terms of biological role, catalyzes the formation of S-adenosylmethionine (AdoMet) from methionine and ATP. The overall synthetic reaction is composed of two sequential steps, AdoMet formation and the subsequent tripolyphosphate hydrolysis which occurs prior to release of AdoMet from the enzyme. The protein is S-adenosylmethionine synthase of Pseudomonas fluorescens (strain Pf0-1).